Reading from the N-terminus, the 189-residue chain is dCTP deaminase, dUMP-forming (189 aa).

Residues 101–106 (KSSLGR), aspartate 119, 127–129 (TLE), glutamine 148, tyrosine 162, and glutamine 174 contribute to the dCTP site. Glutamate 129 functions as the Proton donor/acceptor in the catalytic mechanism. Positions 166-189 (AVGSKYQGQRGPTPSRSHLNFIKS) are disordered. The span at 171–189 (YQGQRGPTPSRSHLNFIKS) shows a compositional bias: polar residues.

This sequence belongs to the dCTP deaminase family. In terms of assembly, homotrimer.

The enzyme catalyses dCTP + 2 H2O = dUMP + NH4(+) + diphosphate. It participates in pyrimidine metabolism; dUMP biosynthesis; dUMP from dCTP: step 1/1. Its function is as follows. Bifunctional enzyme that catalyzes both the deamination of dCTP to dUTP and the hydrolysis of dUTP to dUMP without releasing the toxic dUTP intermediate. This Mycolicibacterium smegmatis (strain ATCC 700084 / mc(2)155) (Mycobacterium smegmatis) protein is dCTP deaminase, dUMP-forming.